The chain runs to 280 residues: Late embryogenesis abundant protein 76 (280 aa).

Disordered regions lie at residues 1-156 (MASN…GEAV) and 220-241 (EEED…TDPT). Basic and acidic residues predominate over residues 28–39 (MRDKAEEGKDKT). 5 LEA 11-mer repeat repeats span residues 31-41 (KAEEGKDKTSQ), 53-63 (TAQAAKDKTSQ), 75-85 (TAQAAKDKTSQ), 97-107 (TAQAAKDKTSQ), and 119-129 (TTQSSKEKTSQ). Low complexity predominate over residues 40-114 (SQTAQKAQQK…TSQAAQTTQQ (75 aa)). 2 stretches are compositionally biased toward basic and acidic residues: residues 115 to 127 (KAHE…KEKT) and 136 to 145 (EKARETKDKT). The span at 230 to 239 (TTTCTTQSTD) shows a compositional bias: low complexity.

It belongs to the LEA type 4 family.

In terms of biological role, lea proteins are late embryonic proteins abundant in higher plant seed embryos. In Brassica napus (Rape), this protein is Late embryogenesis abundant protein 76.